Here is a 159-residue protein sequence, read N- to C-terminus: MINYLKSFFLYEIIRGMTLTLKYFFKPKVTINYPYEKSPVSPRFKGEHALRRYENGEERCIACKLCEAICPAQAIVIESDERDDGSRRTTRYDIDMTKCIYCGLCQEACPVDAIVEGPNFEFASLTHTALIYDKERLLNNGDKWEQALANKLHKDYQYR.

4Fe-4S ferredoxin-type domains are found at residues 51-80 (RRYE…IESD) and 90-119 (TRYD…EGPN). The [4Fe-4S] cluster site is built by cysteine 60, cysteine 63, cysteine 66, cysteine 70, cysteine 99, cysteine 102, cysteine 105, and cysteine 109.

Belongs to the complex I 23 kDa subunit family. NDH-1 is composed of 14 different subunits. Subunits NuoA, H, J, K, L, M, N constitute the membrane sector of the complex. [4Fe-4S] cluster serves as cofactor.

It is found in the cell inner membrane. It carries out the reaction a quinone + NADH + 5 H(+)(in) = a quinol + NAD(+) + 4 H(+)(out). Functionally, NDH-1 shuttles electrons from NADH, via FMN and iron-sulfur (Fe-S) centers, to quinones in the respiratory chain. The immediate electron acceptor for the enzyme in this species is believed to be ubiquinone. Couples the redox reaction to proton translocation (for every two electrons transferred, four hydrogen ions are translocated across the cytoplasmic membrane), and thus conserves the redox energy in a proton gradient. The polypeptide is NADH-quinone oxidoreductase subunit I (Rickettsia prowazekii (strain Madrid E)).